Reading from the N-terminus, the 268-residue chain is Energy-coupling factor transporter transmembrane protein EcfT (268 aa).

5 helical membrane passes run 28–48 (FVFLFIILIFFCHSPLTYLWV), 63–83 (LWFLIKGLTPIFFFLIFTLMM), 107–127 (ILEGLYISLRLIGIVMIATIM), 152–172 (LPVHQLSMIMSIALRFIPTLM), and 248–268 (ISLTMIIPIAIILFVLKYSGV).

It belongs to the energy-coupling factor EcfT family. Forms a stable energy-coupling factor (ECF) transporter complex composed of 2 membrane-embedded substrate-binding proteins (S component), 2 ATP-binding proteins (A component) and 2 transmembrane proteins (T component). May be able to interact with more than 1 S component at a time.

It is found in the cell membrane. Its function is as follows. Transmembrane (T) component of an energy-coupling factor (ECF) ABC-transporter complex. Unlike classic ABC transporters this ECF transporter provides the energy necessary to transport a number of different substrates. This is Energy-coupling factor transporter transmembrane protein EcfT from Staphylococcus aureus (strain 04-02981).